Reading from the N-terminus, the 906-residue chain is MAEAVVSFGVEKLWELLSRESARLNGIDEQVDGLKRQLGRLQSLLKDADAKKNETERVRNFLEDVKDIVYDADDIIESFLLNELRGKEKGIKKQVRTLACFLVDRRKFASDIEGITKRISEVIVGMQSLGIQHIADGGGRSLSLQERQREIRQTFSRNSESDLVGLDQSVEELVDHLVENDSVQVVSVSGMGGIGKTTLARQVFHHDIVRRHFDGFSWVCVSQQFTRKDVWQRILQDLRPYDEGIIQMDEYTLQGELFELLESGRYLLVLDDVWKEEDWDRIKAVFPHKRGWKMLLTSRNEGLGLHADPTCFAFRPRILTPEQSWKLFERIVSSRRDKTEFKVDEAMGKEMVTYCGGLPLAVKVLGGLLAKKHTVLEWKRVHSNIVTHIVGKSGLSDDNSNSVYRVLSLSYEDLPMQLKHCFFYLAHFPEDYKIDVKILFNYWVAEGIITPFHDGSTIQDTGESYLEELVRRNMVVVEESYLTSRIEYCQMHDMMREVCLSKAKEENFIRVVKVPTTTSTTINAQSPCRSRRLVLHSGNALHMLGHKDNKKARSVLIFGVEEKFWKPRGFQCLPLLRVLDLSYVQFEGGKLPSSIGDLIHLRFLSLYEAGVSHLPSSLGNLKLLLCLNLGVADRLLVHVPNVLKEMQELRYLRLPRSMPAKTKLELGDLVNLESLTNFSTKHGSVTDLLRMTKLSVLNVIFSGECTFETLLLSLRELRNLETLSFHDFQKVSVANHGGELLVLDFIHLKDLTLSMHLPRFPDQYRFPPHLAHIWLIGCRMEEDPMPILEKLLHLKSVYLSSGAFLGRRMVCSKGGFPQLLALKMSYKKELVEWRVEEGSMPCLRTLTIDNCKKLKQLPDGLKYVTCLKELKIERMKREWTERLVIGGEDYYKVQHIPSVQFINCDH.

Positions 15-68 form a coiled coil; sequence ELLSRESARLNGIDEQVDGLKRQLGRLQSLLKDADAKKNETERVRNFLEDVKDI. Positions 144–454 constitute an NB-ARC domain; it reads LQERQREIRQ…AEGIITPFHD (311 aa). 190 to 197 contributes to the ATP binding site; that stretch reads GMGGIGKT. LRR repeat units follow at residues 573 to 597, 598 to 621, 623 to 644, 646 to 671, 672 to 696, 704 to 727, 740 to 766, 767 to 790, 791 to 818, and 840 to 865; these read LPLL…SIGD, LIHL…LGNL, LLLC…NVLK, MQEL…DLVN, LESL…KLSV, ECTF…SFHD, LLVL…QYRF, PPHL…ILEK, LLHL…GFPQ, and MPCL…KYVT.

It belongs to the disease resistance NB-LRR family. RPP8/HRT subfamily.

Potential disease resistance protein. In Arabidopsis thaliana (Mouse-ear cress), this protein is Probable disease resistance RPP8-like protein 2 (RPP8L2).